A 102-amino-acid chain; its full sequence is Small ribosomal subunit protein uS10 (102 aa).

The protein belongs to the universal ribosomal protein uS10 family. As to quaternary structure, part of the 30S ribosomal subunit.

In terms of biological role, involved in the binding of tRNA to the ribosomes. The polypeptide is Small ribosomal subunit protein uS10 (Acidothermus cellulolyticus (strain ATCC 43068 / DSM 8971 / 11B)).